A 563-amino-acid polypeptide reads, in one-letter code: Quinidine resistance protein 1 (563 aa).

Positions 1–10 (MTKQQTSVMR) are enriched in polar residues. The disordered stretch occupies residues 1-50 (MTKQQTSVMRNASIAKEEREGSDNNNVDRSSSDAISDNDAERSNSHSEID). Residues 1 to 75 (MTKQQTSVMR…KQKMLLVVQC (75 aa)) lie on the Cytoplasmic side of the membrane. Residues 23–33 (DNNNVDRSSSD) show a composition bias toward low complexity. Positions 39–49 (DAERSNSHSEI) are enriched in basic and acidic residues. A helical membrane pass occupies residues 76-96 (AFTGFFSTVAGSIYYPVLTII). The Extracellular portion of the chain corresponds to 97-108 (ERKFNITEELAN). A helical transmembrane segment spans residues 109-129 (VTIVVYFIFQGVAPSIMGGLA). Residues 130–135 (DTFGRR) lie on the Cytoplasmic side of the membrane. The chain crosses the membrane as a helical span at residues 136-156 (PIVLWAILAYFCACIGLACAH). Topologically, residues 157-165 (NYAQILALR) are extracellular. A helical transmembrane segment spans residues 166–186 (CLQAAGISPVIAINSGIMGDV). Residues 187–195 (TTKVERGGY) are Cytoplasmic-facing. A helical transmembrane segment spans residues 196–216 (VGLVAGFQVVGTAFGALIGAG). Topologically, residues 217–224 (LSSKWGWR) are extracellular. Residues 225-245 (AIFWFLAIGSGICLVFSTLLM) traverse the membrane as a helical segment. Topologically, residues 246–296 (PETKRTLVGNGSVTPRSFLNRSLILHVGSVKKTLHLDDPDPETLEPRTSVD) are cytoplasmic. A helical membrane pass occupies residues 297-317 (FLAPLKILHIREIDILLSIAG). The Extracellular portion of the chain corresponds to 318 to 341 (LQFSTWTTHQTALTIVLSKKYNLS). The chain crosses the membrane as a helical span at residues 342–362 (VAKIGLCFLPAGISTLTSIIS). At 363–421 (AGRYLNWSYRTRKVKYNRWIKEQELQLMEKYKGDKNKVAELIHSNSHYAFNLVEARLHP) the chain is on the cytoplasmic side. A helical transmembrane segment spans residues 422 to 442 (AFVTLLLSSIGFTAFGWCISV). Residues 443–445 (KTP) are Extracellular-facing. The chain crosses the membrane as a helical span at residues 446 to 466 (LAAVLCTSAFASLFSNCILTF). Over 467-481 (STTLIVDLFPSKAST) the chain is Cytoplasmic. The chain crosses the membrane as a helical span at residues 482-502 (ATGCLNLFRCLLSAIFIAALT). At 503–511 (KMVEKMRYG) the chain is on the extracellular side. The chain crosses the membrane as a helical span at residues 512 to 532 (GVFTFLSAITSSSSLLLFYLL). At 533-563 (KNGKQLSFDRIRANDKSAGRSVGKNSEKVST) the chain is on the cytoplasmic side.

Belongs to the major facilitator superfamily. CAR1 family.

It localises to the cell membrane. Its function is as follows. Multidrug resistance transporter involved in resistance and adaptation to quinidine and ketoconazole. The protein is Quinidine resistance protein 1 (QDR1) of Saccharomyces cerevisiae (strain ATCC 204508 / S288c) (Baker's yeast).